The sequence spans 707 residues: MSSKATQDPEAVLAEQSDDATEAGLRRQWQELADEVRDHQFRYYVRDAPIITDAEFDAMLRRLEALEEAHPELRTPDSPTQLVGGAGFATDFTAAEHLERMLSLDNVFTPDELAAWAARIRTEIGADAQYLCELKIDGVALSLVYRDGRLERGATRGDGRTGEDVTLNARTIEDVPEKLTGTEEFPLPSVLEVRGEVFFRIADFEDLNAGLVAEGKPPFANPRNSAAGSLRQKNPAVTARRRLRMICHGLGHIEDAAGFPFRTLHDAYRALQAWGLPVSPHTAQVTGLDAVTERIAYWGEHRHDVEHEIDGVVVKVDEVALQRRLGATSRAPRWAVAYKYPPEEAQTKLLDIRVNVGRTGRVTPFAYMEPVKIAGSTVGLATLHNGSEVKRKGVLIGDTVVIRKAGDVIPEVLGPVVDLRDGSEREFVMPTHCPECGTELAPAKEGDADIRCPNSRTCPAQLRERVFHVAGRGAFDIEGLGYEAAIALLQARVITDEGDLFTLTADDLLRTDLFTTKAGELSANGKRLLTNLGKAKAQPLWRVLVALSIRHVGPTAARALATEFGSLDAIVAASEEELAAVEGVGPTIAAAVTDWFTVDWHRTIVDKWRAAGVRMADERDASIERTLDGLSIVVTGSLTGYSRDEAKEAIIARGGKAAGSVSKKTAYVVAGDSPGSKYDKAIELGVPVLDEDGFRRLLENGPDTPDS.

Residues 1 to 23 (MSSKATQDPEAVLAEQSDDATEA) are disordered. NAD(+) is bound by residues 53–57 (DAEFD), 103–104 (SL), and glutamate 133. Lysine 135 functions as the N6-AMP-lysine intermediate in the catalytic mechanism. NAD(+) is bound by residues arginine 156, glutamate 196, lysine 315, and lysine 339. The Zn(2+) site is built by cysteine 433, cysteine 436, cysteine 452, and cysteine 458. The BRCT domain occupies 622 to 707 (SIERTLDGLS…LENGPDTPDS (86 aa)).

It belongs to the NAD-dependent DNA ligase family. LigA subfamily. Mg(2+) serves as cofactor. Mn(2+) is required as a cofactor.

It carries out the reaction NAD(+) + (deoxyribonucleotide)n-3'-hydroxyl + 5'-phospho-(deoxyribonucleotide)m = (deoxyribonucleotide)n+m + AMP + beta-nicotinamide D-nucleotide.. In terms of biological role, DNA ligase that catalyzes the formation of phosphodiester linkages between 5'-phosphoryl and 3'-hydroxyl groups in double-stranded DNA using NAD as a coenzyme and as the energy source for the reaction. It is essential for DNA replication and repair of damaged DNA. This is DNA ligase from Mycolicibacterium vanbaalenii (strain DSM 7251 / JCM 13017 / BCRC 16820 / KCTC 9966 / NRRL B-24157 / PYR-1) (Mycobacterium vanbaalenii).